Consider the following 549-residue polypeptide: Cytochrome bc1 complex cytochrome b subunit (549 aa).

The helical transmembrane segment at 54–74 threads the bilayer; the sequence is VCLYSFIIIILTGVYLTLFFH. Heme contacts are provided by H118 and H132. Transmembrane regions (helical) follow at residues 122-142, 150-170, and 182-202; these read ALIFLAGMFVHMMRVFFTGAF, WLFGFLLLVLGMFTGFTGYSL, and FMEGAILSVPIVGTYISFFLF. Residues H219 and H234 each coordinate heme. The next 5 helical transmembrane spans lie at 220 to 240, 269 to 289, 334 to 354, 389 to 409, and 417 to 437; these read ILLLPGIMLGLLVGHLILVFY, AGGFFFLVFGVISVVSAIATI, LVLGVFVPLLIFPLVLAAIAV, FGVAWLTVYFVLLIGGGNDLW, and INAITWFVRIAFFVGPVVAFI.

The protein belongs to the cytochrome b family. As to quaternary structure, the cytochrome bc1 complex is composed of a cytochrome b (QcrB), the Rieske iron-sulfur protein (QcrA) and a diheme cytochrome c (QcrC) subunit. Requires heme as cofactor.

It localises to the cell membrane. It catalyses the reaction a quinol + 2 Fe(III)-[cytochrome c](out) = a quinone + 2 Fe(II)-[cytochrome c](out) + 2 H(+)(out). Its function is as follows. Cytochrome b subunit of the cytochrome bc1 complex, an essential component of the respiratory electron transport chain required for ATP synthesis. The bc1 complex catalyzes the oxidation of ubiquinol and the reduction of cytochrome c in the respiratory chain. The bc1 complex operates through a Q-cycle mechanism that couples electron transfer to generation of the proton gradient that drives ATP synthesis. The cytochrome b subunit contains two ubiquinol reactive sites: the oxidation (QP) site and the reduction (QN) site. In Streptomyces lividans, this protein is Cytochrome bc1 complex cytochrome b subunit (qcrB).